Reading from the N-terminus, the 96-residue chain is Conglutin delta 4 (96 aa).

An N-terminal signal peptide occupies residues 1–22 (MARLTILIAFVAALVLVVHTSA). 2 cysteine pairs are disulfide-bonded: Cys-29-Cys-78 and Cys-80-Cys-91.

The protein belongs to the 2S seed storage albumins family.

It is found in the endoplasmic reticulum. The sequence is that of Conglutin delta 4 from Lupinus angustifolius (Narrow-leaved blue lupine).